A 220-amino-acid chain; its full sequence is Fructose-6-phosphate aldolase (220 aa).

Lys85 functions as the Schiff-base intermediate with substrate in the catalytic mechanism.

This sequence belongs to the transaldolase family. Type 3A subfamily. Homodecamer.

The protein resides in the cytoplasm. It catalyses the reaction beta-D-fructose 6-phosphate = dihydroxyacetone + D-glyceraldehyde 3-phosphate. Its function is as follows. Catalyzes the reversible formation of fructose 6-phosphate from dihydroxyacetone and D-glyceraldehyde 3-phosphate via an aldolization reaction. The sequence is that of Fructose-6-phosphate aldolase from Enterobacter sp. (strain 638).